The sequence spans 319 residues: Large ribosomal subunit protein uL29m (319 aa).

The disordered stretch occupies residues 1–55 (MWKRSFHSQGGPLRARTKFTKPKPKQPVLPKDKIRPPTQLTHHSNNLRITEPIPP). A compositionally biased stretch (basic residues) spans 15-24 (ARTKFTKPKP). Over residues 38–48 (TQLTHHSNNLR) the composition is skewed to polar residues.

It belongs to the universal ribosomal protein uL29 family. As to quaternary structure, component of the mitochondrial large ribosomal subunit. Mature mitochondrial ribosomes consist of a small (37S) and a large (54S) subunit. The 37S subunit contains at least 33 different proteins and 1 molecule of RNA (15S). The 54S subunit contains at least 45 different proteins and 1 molecule of RNA (21S).

The protein localises to the mitochondrion. The polypeptide is Large ribosomal subunit protein uL29m (MRPL4) (Saccharomyces cerevisiae (strain YJM789) (Baker's yeast)).